The chain runs to 2285 residues: Protein Ycf2 (2285 aa).

An ATP-binding site is contributed by 1638–1645; sequence GSIGTGRS.

The protein belongs to the Ycf2 family.

It localises to the plastid. It is found in the chloroplast stroma. In terms of biological role, probable ATPase of unknown function. Its presence in a non-photosynthetic plant (Epifagus virginiana) and experiments in tobacco indicate that it has an essential function which is probably not related to photosynthesis. This chain is Protein Ycf2, found in Populus trichocarpa (Western balsam poplar).